Consider the following 414-residue polypeptide: Esterase FrsA (414 aa).

It belongs to the FrsA family.

It catalyses the reaction a carboxylic ester + H2O = an alcohol + a carboxylate + H(+). Its function is as follows. Catalyzes the hydrolysis of esters. The protein is Esterase FrsA of Enterobacter sp. (strain 638).